We begin with the raw amino-acid sequence, 123 residues long: Histone H2B (123 aa).

The disordered stretch occupies residues M1–R32. Positions G9–R32 are enriched in basic residues. S110 is a glycosylation site (O-linked (GlcNAc) serine). A Glycyl lysine isopeptide (Lys-Gly) (interchain with G-Cter in ubiquitin) cross-link involves residue K118.

The protein belongs to the histone H2B family. In terms of assembly, the nucleosome is a histone octamer containing two molecules each of H2A, H2B, H3 and H4 assembled in one H3-H4 heterotetramer and two H2A-H2B heterodimers. The octamer wraps approximately 147 bp of DNA. Post-translationally, monoubiquitination of Lys-118 gives a specific tag for epigenetic transcriptional activation and is also prerequisite for histone H3 'Lys-4' and 'Lys-79' methylation.

The protein localises to the nucleus. The protein resides in the chromosome. In terms of biological role, core component of nucleosome. Nucleosomes wrap and compact DNA into chromatin, limiting DNA accessibility to the cellular machineries which require DNA as a template. Histones thereby play a central role in transcription regulation, DNA repair, DNA replication and chromosomal stability. DNA accessibility is regulated via a complex set of post-translational modifications of histones, also called histone code, and nucleosome remodeling. This Urechis caupo (Innkeeper worm) protein is Histone H2B.